We begin with the raw amino-acid sequence, 430 residues long: Glutamate-1-semialdehyde 2,1-aminomutase (430 aa).

K265 carries the N6-(pyridoxal phosphate)lysine modification.

The protein belongs to the class-III pyridoxal-phosphate-dependent aminotransferase family. HemL subfamily. In terms of assembly, homodimer. Pyridoxal 5'-phosphate is required as a cofactor.

The protein resides in the cytoplasm. It catalyses the reaction (S)-4-amino-5-oxopentanoate = 5-aminolevulinate. Its pathway is porphyrin-containing compound metabolism; protoporphyrin-IX biosynthesis; 5-aminolevulinate from L-glutamyl-tRNA(Glu): step 2/2. The sequence is that of Glutamate-1-semialdehyde 2,1-aminomutase from Helicobacter pylori (strain HPAG1).